A 241-amino-acid polypeptide reads, in one-letter code: Polyol phosphate phosphatase PYP1 (241 aa).

Asp9 acts as the Nucleophile in catalysis. Residues Asp9, Asp11, and Asp179 each contribute to the Mg(2+) site. Catalysis depends on Asp11, which acts as the Proton donor.

The protein belongs to the HAD-like hydrolase superfamily. Mg(2+) is required as a cofactor.

Its subcellular location is the cytoplasm. It localises to the nucleus. It carries out the reaction D-ribitol 5-phosphate + H2O = ribitol + phosphate. The catalysed reaction is D-sorbitol 6-phosphate + H2O = D-sorbitol + phosphate. It catalyses the reaction sn-glycerol 1-phosphate + H2O = glycerol + phosphate. The enzyme catalyses D-erythrose 4-phosphate + H2O = D-erythrose + phosphate. Hydrolyzes sugar alcohol (polyol) phosphates. Dephosphorylates a variety of substrates, including: sn-glycerol 1-phosphate (D-glycerol 3-phosphate), D-ribitol 5-phosphate, D-sorbitol 6-phosphate (D-glucitol 6-phosphate), and D-erythrose 4-phosphate. Prevents accumulation of toxic levels of polyol phosphates, which can impair glycolysis by inhibiting glucose-6-phosphate isomerase. The protein is Polyol phosphate phosphatase PYP1 of Saccharomyces cerevisiae (strain ATCC 204508 / S288c) (Baker's yeast).